A 101-amino-acid polypeptide reads, in one-letter code: NAD(P)H-quinone oxidoreductase subunit 4L, chloroplastic (101 aa).

3 helical membrane-spanning segments follow: residues 2-22 (ILDS…YGLI), 32-52 (MSLE…SNFI), and 64-84 (IFIM…ILAI).

This sequence belongs to the complex I subunit 4L family. NDH is composed of at least 16 different subunits, 5 of which are encoded in the nucleus.

It is found in the plastid. The protein localises to the chloroplast thylakoid membrane. The catalysed reaction is a plastoquinone + NADH + (n+1) H(+)(in) = a plastoquinol + NAD(+) + n H(+)(out). It carries out the reaction a plastoquinone + NADPH + (n+1) H(+)(in) = a plastoquinol + NADP(+) + n H(+)(out). Functionally, NDH shuttles electrons from NAD(P)H:plastoquinone, via FMN and iron-sulfur (Fe-S) centers, to quinones in the photosynthetic chain and possibly in a chloroplast respiratory chain. The immediate electron acceptor for the enzyme in this species is believed to be plastoquinone. Couples the redox reaction to proton translocation, and thus conserves the redox energy in a proton gradient. This chain is NAD(P)H-quinone oxidoreductase subunit 4L, chloroplastic, found in Chlorokybus atmophyticus (Soil alga).